The following is a 127-amino-acid chain: uncharacterized protein (127 aa).

A signal peptide spans Met1–Ser26.

This is an uncharacterized protein from Archaeoglobus fulgidus (strain ATCC 49558 / DSM 4304 / JCM 9628 / NBRC 100126 / VC-16).